A 93-amino-acid chain; its full sequence is Large ribosomal subunit protein bL27 (93 aa).

Positions 1 to 8 are excised as a propeptide; it reads MIMDLQFF. The interval 8–29 is disordered; it reads FSHHKGGGSTANGRNSAGRRLG.

This sequence belongs to the bacterial ribosomal protein bL27 family. The N-terminus is cleaved by ribosomal processing cysteine protease Prp.

This Limosilactobacillus reuteri (strain DSM 20016) (Lactobacillus reuteri) protein is Large ribosomal subunit protein bL27.